The following is a 502-amino-acid chain: Sporulation-specific protein 2 (502 aa).

An N-terminal signal peptide occupies residues 1-56; it reads MPIWKTQTFFTSISVIQIVNKETKVSTKKEKDSMLNQLNTILRFLFLFLQLIKSSA. Residues Asn77, Asn135, Asn285, Asn303, Asn340, Asn343, and Asn355 are each glycosylated (N-linked (GlcNAc...) asparagine). The segment at 441–474 is disordered; that stretch reads EGNVLGKQETDNDNGKKEKGKNGAKSQGSSKKME. The span at 448–461 shows a compositional bias: basic and acidic residues; it reads QETDNDNGKKEKGK. Residue Asn475 is the site of GPI-anchor amidated asparagine attachment. Positions 476–502 are cleaved as a propeptide — removed in mature form; that stretch reads SAPKNIFIDAFKMSVYAVFTVLFSIIF.

The protein belongs to the SPS2 family.

It localises to the cell membrane. Involved in middle stages of meiosis. Redundant with SPS22 for the organization of the beta-glucan layer of the spore wall. The sequence is that of Sporulation-specific protein 2 (SPS2) from Saccharomyces cerevisiae (strain ATCC 204508 / S288c) (Baker's yeast).